Here is a 41-residue protein sequence, read N- to C-terminus: Peroxidase 3 (41 aa).

The protein belongs to the peroxidase family. Classical plant (class III) peroxidase subfamily. Heme b is required as a cofactor. The cofactor is Ca(2+).

Its subcellular location is the secreted. The catalysed reaction is 2 a phenolic donor + H2O2 = 2 a phenolic radical donor + 2 H2O. Removal of H(2)O(2), oxidation of toxic reductants, biosynthesis and degradation of lignin, suberization, auxin catabolism, response to environmental stresses such as wounding, pathogen attack and oxidative stress. These functions might be dependent on each isozyme/isoform in each plant tissue. The sequence is that of Peroxidase 3 from Vitis vinifera (Grape).